Reading from the N-terminus, the 175-residue chain is Large ribosomal subunit protein uL10 (175 aa).

Belongs to the universal ribosomal protein uL10 family. In terms of assembly, part of the ribosomal stalk of the 50S ribosomal subunit. The N-terminus interacts with L11 and the large rRNA to form the base of the stalk. The C-terminus forms an elongated spine to which L12 dimers bind in a sequential fashion forming a multimeric L10(L12)X complex.

Functionally, forms part of the ribosomal stalk, playing a central role in the interaction of the ribosome with GTP-bound translation factors. The polypeptide is Large ribosomal subunit protein uL10 (Prochlorococcus marinus (strain MIT 9215)).